The chain runs to 178 residues: Large ribosomal subunit protein uL6 (178 aa).

Belongs to the universal ribosomal protein uL6 family. As to quaternary structure, part of the 50S ribosomal subunit.

Its function is as follows. This protein binds to the 23S rRNA, and is important in its secondary structure. It is located near the subunit interface in the base of the L7/L12 stalk, and near the tRNA binding site of the peptidyltransferase center. The polypeptide is Large ribosomal subunit protein uL6 (Coxiella burnetii (strain CbuK_Q154) (Coxiella burnetii (strain Q154))).